Here is a 161-residue protein sequence, read N- to C-terminus: uncharacterized protein (161 aa).

A compositionally biased stretch (low complexity) spans 1–16; sequence MPRAGRAPAEGGPAPG. Disordered stretches follow at residues 1–23, 50–91, and 140–161; these read MPRAGRAPAEGGPAPGTRSSRCL, GRPV…TQSA, and RGPACGSTAQWPPRGDPTWRIS.

This is an uncharacterized protein from Homo sapiens (Human).